The primary structure comprises 104 residues: Protein P3 (104 aa).

A helical membrane pass occupies residues 77-99 (LVFGVPQKTLLLGFGGLLVLGLV).

In terms of assembly, homodimer.

The protein localises to the virion membrane. This Pseudoalteromonas phage PM2 (Bacteriophage PM2) protein is Protein P3 (III).